Here is a 764-residue protein sequence, read N- to C-terminus: ATP-dependent DNA helicase DDM1 (764 aa).

Residues 1 to 42 (MVSLRSRKVIPASEMVSDGKTEKDASGDSPTSVLNEEENCEE) are disordered. The segment covering 17–26 (SDGKTEKDAS) has biased composition (basic and acidic residues). The stretch at 62 to 88 (LISEAMAQEEEQLLKLREDEEKANNAG) forms a coiled coil. Positions 129–152 (IESESQKAEPEKTGRGRKRKAASQ) are disordered. Residues 132 to 142 (ESQKAEPEKTG) show a composition bias toward basic and acidic residues. The Nuclear localization signal 1 motif lies at 145–152 (RKRKAASQ). The Helicase ATP-binding domain maps to 214 to 382 (ISLWQNGLNG…WSLLNFILPD (169 aa)). 227-234 (DQMGLGKT) serves as a coordination point for ATP. Residues 333 to 336 (DEGH) carry the DEAH box motif. A Nuclear localization signal 2 motif is present at residues 429–436 (LRRMKCDV). The Helicase C-terminal domain occupies 528–695 (LLERLLVRLF…STPLEEEDIL (168 aa)).

The protein belongs to the SNF2/RAD54 helicase family. Interacts with the MBD domains of MBD2, MBD5 and MBD6.

The protein resides in the nucleus. It catalyses the reaction ATP + H2O = ADP + phosphate + H(+). With respect to regulation, ATPase activity is stimulated 3-fold by DNA (both free and nucleosomal) binding. In terms of biological role, ATP-dependent DNA helicase that plays a role in formation, organization, stability and heritability of heterochromatin and thus regulates several physiological traits. Binds to the nucleosome and promotes chromatin remodeling in an ATP-dependent manner; induces nucleosome repositioning on a short DNA fragment, and, possibly, could be guided to target sites (including silent transposable elements) by small interfering RNAs (siRNAs). Can bind both free and nucleosomal DNA. Required for the heritable maintenance of genome integrity and transcriptional gene silencing (TGS), including homology-dependent gene silencing (HDG silencing), via the maintenance of DNA methylation (mostly on cytosine, in both CpG and CpHpG sites, where H is A, T or C) and of histone methylation (e.g. chromatin methylation). May facilitate localization of MBD proteins at specific nuclear domains. Necessary for the maintenance of the genomic imprint at the MEA locus, especially for the silencing of paternally inherited MEA locus. Plays a major role in the inactivation maintenance of retrotransposons (e.g. Tar17, SINE, LINE, ATLN39, CAC1 (CACTAs), Athila elements, and mutator-like elements MULEs and TIR-MULEs) and the silencing of repeated genes and transgenes (e.g. T-DNA insertions). Required for KYP-dependent histone H3 'Lys-9' (H3K9me) methylation, deacetylation of histone H4 'Lys-16' (H4K16) and MET1-dependent DNA methylation. Involved in the chromatin organization of 5S rRNA genes (localized in the pericentromeric heterochromatin of chromosomes 3, 4, and 5) modifications during heterochromatin establishment. Prevents siRNA accumulation (siRNA are probably involved in epigenetic inheritance and in 5S rRNA genes regulation by silencing). Required during plant organogenesis and development, as well as during seed formation. In Arabidopsis thaliana (Mouse-ear cress), this protein is ATP-dependent DNA helicase DDM1 (DDM1).